The chain runs to 162 residues: NADH-quinone oxidoreductase subunit I (162 aa).

4Fe-4S ferredoxin-type domains are found at residues 52–82 (LRRY…IEAG) and 93–122 (TRYD…EGPN). The [4Fe-4S] cluster site is built by Cys62, Cys65, Cys68, Cys72, Cys102, Cys105, Cys108, and Cys112.

It belongs to the complex I 23 kDa subunit family. NDH-1 is composed of 14 different subunits. Subunits NuoA, H, J, K, L, M, N constitute the membrane sector of the complex. It depends on [4Fe-4S] cluster as a cofactor.

It localises to the cell inner membrane. It catalyses the reaction a quinone + NADH + 5 H(+)(in) = a quinol + NAD(+) + 4 H(+)(out). Its function is as follows. NDH-1 shuttles electrons from NADH, via FMN and iron-sulfur (Fe-S) centers, to quinones in the respiratory chain. The immediate electron acceptor for the enzyme in this species is believed to be ubiquinone. Couples the redox reaction to proton translocation (for every two electrons transferred, four hydrogen ions are translocated across the cytoplasmic membrane), and thus conserves the redox energy in a proton gradient. This Methylobacterium nodulans (strain LMG 21967 / CNCM I-2342 / ORS 2060) protein is NADH-quinone oxidoreductase subunit I.